Reading from the N-terminus, the 150-residue chain is Large ribosomal subunit protein bL9 (150 aa).

The protein belongs to the bacterial ribosomal protein bL9 family.

Functionally, binds to the 23S rRNA. The protein is Large ribosomal subunit protein bL9 of Colwellia psychrerythraea (strain 34H / ATCC BAA-681) (Vibrio psychroerythus).